We begin with the raw amino-acid sequence, 202 residues long: Small ribosomal subunit protein uS4 (202 aa).

In terms of domain architecture, S4 RNA-binding spans 91–168 (SRLSSVLYNS…QKVPDYLEVD (78 aa)).

The protein belongs to the universal ribosomal protein uS4 family. As to quaternary structure, part of the 30S ribosomal subunit. Contacts protein S5. The interaction surface between S4 and S5 is involved in control of translational fidelity.

In terms of biological role, one of the primary rRNA binding proteins, it binds directly to 16S rRNA where it nucleates assembly of the body of the 30S subunit. Functionally, with S5 and S12 plays an important role in translational accuracy. The polypeptide is Small ribosomal subunit protein uS4 (Ehrlichia chaffeensis (strain ATCC CRL-10679 / Arkansas)).